The following is a 464-amino-acid chain: Cyclin-dependent kinase 8 (464 aa).

Residues 1-15 (MDYDFKVKLSSERER) are interaction with CCNC. The region spanning 21–335 (EYEGCKVGRG…SEQAMQDPYF (315 aa)) is the Protein kinase domain. Residues 27 to 35 (VGRGTYGHV) and Lys52 each bind ATP. Residue Asp151 is the Proton acceptor of the active site. Residues 358–464 (FLTEEEPDEK…PQYSHQTHRY (107 aa)) are disordered. Over residues 373–391 (QQQQQGNNHTNGTGHPGNQ) the composition is skewed to low complexity. 2 stretches are compositionally biased toward polar residues: residues 409–426 (PTTT…QRSN) and 436–464 (PSTS…THRY).

It belongs to the protein kinase superfamily. CMGC Ser/Thr protein kinase family. CDC2/CDKX subfamily. In terms of assembly, component of the Mediator complex, which is composed of MED1, MED4, MED6, MED7, MED8, MED9, MED10, MED11, MED12, MED13, MED13L, MED14, MED15, MED16, MED17, MED18, MED19, MED20, MED21, MED22, MED23, MED24, MED25, MED26, MED27, MED29, MED30, MED31, CCNC, CDK8 and CDC2L6/CDK11. The MED12, MED13, CCNC and CDK8 subunits form a distinct module termed the CDK8 module. Mediator containing the CDK8 module is less active than Mediator lacking this module in supporting transcriptional activation. Individual preparations of the Mediator complex lacking one or more distinct subunits have been variously termed ARC, CRSP, DRIP, PC2, SMCC and TRAP. The cylin/CDK pair formed by CCNC/CDK8 also associates with the large subunit of RNA polymerase II. Interacts with CTNNB1, GLI3 and MAML1. The cofactor is Mg(2+).

It is found in the nucleus. It catalyses the reaction L-seryl-[protein] + ATP = O-phospho-L-seryl-[protein] + ADP + H(+). The enzyme catalyses L-threonyl-[protein] + ATP = O-phospho-L-threonyl-[protein] + ADP + H(+). The catalysed reaction is [DNA-directed RNA polymerase] + ATP = phospho-[DNA-directed RNA polymerase] + ADP + H(+). In terms of biological role, component of the Mediator complex, a coactivator involved in regulated gene transcription of nearly all RNA polymerase II-dependent genes. Mediator functions as a bridge to convey information from gene-specific regulatory proteins to the basal RNA polymerase II transcription machinery. Mediator is recruited to promoters by direct interactions with regulatory proteins and serves as a scaffold for the assembly of a functional pre-initiation complex with RNA polymerase II and the general transcription factors. Phosphorylates the CTD (C-terminal domain) of the large subunit of RNA polymerase II (RNAp II), which may inhibit the formation of a transcription initiation complex. Phosphorylates CCNH leading to down-regulation of the TFIIH complex and transcriptional repression. Recruited through interaction with MAML1 to hyperphosphorylate the intracellular domain of NOTCH, leading to its degradation. The chain is Cyclin-dependent kinase 8 (Cdk8) from Mus musculus (Mouse).